The sequence spans 552 residues: Urocanate hydratase (552 aa).

NAD(+)-binding positions include 49 to 50 (GG), glutamine 127, 173 to 175 (GMG), aspartate 193, 239 to 240 (NA), 260 to 264 (QTSAH), 270 to 271 (YI), and tyrosine 319. Cysteine 407 is an active-site residue. NAD(+) is bound at residue glycine 489.

The protein belongs to the urocanase family. It depends on NAD(+) as a cofactor.

It localises to the cytoplasm. It carries out the reaction 4-imidazolone-5-propanoate = trans-urocanate + H2O. The protein operates within amino-acid degradation; L-histidine degradation into L-glutamate; N-formimidoyl-L-glutamate from L-histidine: step 2/3. In terms of biological role, catalyzes the conversion of urocanate to 4-imidazolone-5-propionate. This chain is Urocanate hydratase, found in Bacillus cereus (strain B4264).